The following is a 212-amino-acid chain: ATP-dependent dethiobiotin synthetase BioD (212 aa).

An ATP-binding site is contributed by D12–F17. A Mg(2+)-binding site is contributed by T16. Residue K33 is part of the active site. Residue S37 participates in substrate binding. ATP contacts are provided by residues D50, E110 to G113, and N170 to C171. Mg(2+)-binding residues include D50 and E110.

The protein belongs to the dethiobiotin synthetase family. As to quaternary structure, homodimer. Requires Mg(2+) as cofactor.

The protein localises to the cytoplasm. The enzyme catalyses (7R,8S)-7,8-diammoniononanoate + CO2 + ATP = (4R,5S)-dethiobiotin + ADP + phosphate + 3 H(+). It participates in cofactor biosynthesis; biotin biosynthesis; biotin from 7,8-diaminononanoate: step 1/2. Catalyzes a mechanistically unusual reaction, the ATP-dependent insertion of CO2 between the N7 and N8 nitrogen atoms of 7,8-diaminopelargonic acid (DAPA, also called 7,8-diammoniononanoate) to form a ureido ring. In Legionella pneumophila (strain Corby), this protein is ATP-dependent dethiobiotin synthetase BioD.